A 912-amino-acid polypeptide reads, in one-letter code: MSRIQYVDQVDQVELDQQQQPGSSSTVSGSTPPLQISPHGSPSLQQSQRLGKHLSKSASELNGHDCHLSESPHISPKRAKSAVAQQLAGVSSGGVASGVGVLQKTHGFFNNLRHRWSRAKSKDRLGRKSPSDFLEESTDYAADYSSEGSSVTHSPRHRSTTIGGSPLAREFRATAKMAQVIQRFGGSMEGRIDEHPENGSAGCSPPELSTQQQLEALQANELRRKREAQLRQFVFFQLRVHLKSGSDLVAMDKNGLSDPYVKFKVGGRLLHKSRTIHRDLNPVWDEVFIVPIEDPFQPIIVKVFDYDWGLQDDFMGSAKLDLTQLELGKAEDIHLQLCDSSGNGGSGLGEILINLTLWPRSQEDKEMHFQRNSKLAESSKRLKSQIWSSVVTILLVKAKDLPLAEDGSKLNDTHFKFRLGNEKYKSKSSWTERWLEQFDLHLFDEDQNLEIALWNRNTLYGKAIIDLSVFQRENTHGIWKPLEDCPGEVHLMLTISGTTALETISDLKAFKEDPREAQLLRERYKFLRCLQNLRDVGHLTVKVFGATGLAAADIGGKSDPFCVLELGNARLQTQTEYKTLTPNWNKIFTFNVKDITQVLEITVFDEDRDHRVEFLGKLVIPLLRIKSGVKRWYTLKDKNLCVRAKGNSPQIQLELTVVWSEIRAVCRALQPKEEKLIQQEAKFKRQLFLRNVNRLKEIIMDILDAARYVQSCFEWESPVRSSIAFVFWIVACVYGDLETVPLVLLLIILKNWLVRLITGTTDAAAHYDYEYDEDDDDDKEKEEKKSIKERLQAIQEVSQTVQNTIGYLASLGESTINTFNFSVPELTWLAVVLLLGAILVLHFVPLRWLLLFWGLMKFSRRLLRPNTIPNNELLDFLSRVPDNEEINQYRELPPSAPTDQTRNNPKKKLKGS.

The segment covering 1 to 33 has biased composition (low complexity); sequence MSRIQYVDQVDQVELDQQQQPGSSSTVSGSTPP. Disordered regions lie at residues 1–80 and 145–165; these read MSRI…KRAK and SSEG…IGGS. Polar residues predominate over residues 38–49; that stretch reads PHGSPSLQQSQR. C2 domains follow at residues 218-337, 371-493, and 522-637; these read QANE…HLQL, RNSK…HLML, and ERYK…TLKD. The Ca(2+) site is built by aspartate 252, aspartate 258, aspartate 305, aspartate 307, and aspartate 313. The Ca(2+) site is built by aspartate 553, aspartate 559, aspartate 605, and aspartate 607. 2 helical membrane-spanning segments follow: residues 729 to 749 and 826 to 846; these read IVAC…LIIL and LTWL…FVPL. The interval 887-912 is disordered; it reads NQYRELPPSAPTDQTRNNPKKKLKGS.

Requires Ca(2+) as cofactor. As to expression, motor neurons (at protein level).

The protein resides in the endoplasmic reticulum membrane. Its function is as follows. Calcium sensor which is essential for the stabilization of normal baseline neurotransmitter release and for the induction and long-term maintenance of presynaptic homeostatic plasticity. This chain is Multiple C2 and transmembrane domain-containing protein, found in Drosophila melanogaster (Fruit fly).